Consider the following 840-residue polypeptide: DNA gyrase subunit A (840 aa).

In terms of domain architecture, Topo IIA-type catalytic spans 51–516 (LPDVRDGFKP…VSSHIDDEDL (466 aa)). Tyrosine 139 acts as the O-(5'-phospho-DNA)-tyrosine intermediate in catalysis. The short motif at 543–549 (QRRGGVG) is the GyrA-box element.

This sequence belongs to the type II topoisomerase GyrA/ParC subunit family. Heterotetramer, composed of two GyrA and two GyrB chains. In the heterotetramer, GyrA contains the active site tyrosine that forms a transient covalent intermediate with DNA, while GyrB binds cofactors and catalyzes ATP hydrolysis.

The protein resides in the cytoplasm. The catalysed reaction is ATP-dependent breakage, passage and rejoining of double-stranded DNA.. A type II topoisomerase that negatively supercoils closed circular double-stranded (ds) DNA in an ATP-dependent manner to modulate DNA topology and maintain chromosomes in an underwound state. Negative supercoiling favors strand separation, and DNA replication, transcription, recombination and repair, all of which involve strand separation. Also able to catalyze the interconversion of other topological isomers of dsDNA rings, including catenanes and knotted rings. Type II topoisomerases break and join 2 DNA strands simultaneously in an ATP-dependent manner. The sequence is that of DNA gyrase subunit A from Ureaplasma parvum serovar 3 (strain ATCC 700970).